A 70-amino-acid chain; its full sequence is MPNQSGSNSSNQLLVPGAAQVIDQMKFEIASEFGVNLGAETTSRANGSVGGEITKRLVSFAQQQMGGGVQ.

The protein belongs to the alpha/beta-type SASP family.

Its function is as follows. SASP are bound to spore DNA. They are double-stranded DNA-binding proteins that cause DNA to change to an a-like conformation. They protect the DNA backbone from chemical and enzymatic cleavage and are thus involved in dormant spore's high resistance to UV light. This is Small, acid-soluble spore protein 1 (sasP-1) from Geobacillus stearothermophilus (Bacillus stearothermophilus).